We begin with the raw amino-acid sequence, 707 residues long: Matrix metalloproteinase-9 (707 aa).

The N-terminal stretch at 1–19 (MSLWQPLVLVLLVLGCCFA) is a signal peptide. A propeptide spans 20–93 (APRQRQSTLV…GELDSATLKA (74 aa)) (activation peptide). Asparagine 38 carries an N-linked (GlcNAc...) asparagine glycan. Positions 97–104 (PRCGVPDL) match the Cysteine switch motif. Zn(2+) is bound at residue cysteine 99. N-linked (GlcNAc...) asparagine glycosylation is found at asparagine 120 and asparagine 127. Ca(2+)-binding residues include aspartate 131 and aspartate 165. Histidine 175 and aspartate 177 together coordinate Zn(2+). Positions 182, 183, 185, and 187 each coordinate Ca(2+). Zn(2+) is bound at residue histidine 190. Glycine 197, glutamine 199, and aspartate 201 together coordinate Ca(2+). Residue histidine 203 coordinates Zn(2+). Residues aspartate 205, aspartate 206, and glutamate 208 each contribute to the Ca(2+) site. 3 consecutive Fibronectin type-II domains span residues 225 to 273 (ADGA…FCPS), 283 to 331 (ADGK…FCPT), and 342 to 390 (SAGE…FCPD). Intrachain disulfides connect cysteine 230-cysteine 256, cysteine 244-cysteine 271, cysteine 288-cysteine 314, cysteine 302-cysteine 329, cysteine 347-cysteine 373, and cysteine 361-cysteine 388. Histidine 401 contributes to the Zn(2+) binding site. Glutamate 402 is a catalytic residue. Zn(2+) contacts are provided by histidine 405 and histidine 411. The segment at 431 to 508 (LHKDDVNGIR…AGPSTATTVP (78 aa)) is disordered. Composition is skewed to pro residues over residues 452 to 475 (RPPT…PPTV) and 486 to 499 (TGPP…PPTA). Cysteine 516 and cysteine 704 are oxidised to a cystine. 4 Hemopexin repeats span residues 518 to 563 (VNIF…WPAL), 564 to 608 (PRKL…GLGA), 610 to 657 (VAQV…FPGV), and 658 to 704 (PLDT…ILQC).

Belongs to the peptidase M10A family. As to quaternary structure, exists as monomer or homodimer; disulfide-linked. Also exists as heterodimer with LCN2. Macrophages and transformed cell lines produce only the monomeric form. Interacts with ECM1. In terms of assembly, (Microbial infection) Interacts with Staphylococcus aureus protein SSL5; this interaction inhibits MMP9 activity. Zn(2+) is required as a cofactor. Requires Ca(2+) as cofactor. Processing of the precursor yields different active forms of 64, 67 and 82 kDa. Sequentially processing by MMP3 yields the 82 kDa matrix metalloproteinase-9. Post-translationally, N- and O-glycosylated. Detected in neutrophils (at protein level). Produced by normal alveolar macrophages and granulocytes.

It localises to the secreted. The protein localises to the extracellular space. It is found in the extracellular matrix. The catalysed reaction is Cleavage of gelatin types I and V and collagen types IV and V.. With respect to regulation, inhibited by histatin-3 1/24 (histatin-5). Inhibited by ECM1. Its function is as follows. Matrix metalloproteinase that plays an essential role in local proteolysis of the extracellular matrix and in leukocyte migration. Could play a role in bone osteoclastic resorption. Cleaves KiSS1 at a Gly-|-Leu bond. Cleaves NINJ1 to generate the Secreted ninjurin-1 form. Cleaves type IV and type V collagen into large C-terminal three quarter fragments and shorter N-terminal one quarter fragments. Degrades fibronectin but not laminin or Pz-peptide. This Homo sapiens (Human) protein is Matrix metalloproteinase-9 (MMP9).